We begin with the raw amino-acid sequence, 124 residues long: Small ribosomal subunit protein uS12 (124 aa).

3-methylthioaspartic acid is present on D89.

The protein belongs to the universal ribosomal protein uS12 family. As to quaternary structure, part of the 30S ribosomal subunit. Contacts proteins S8 and S17. May interact with IF1 in the 30S initiation complex.

In terms of biological role, with S4 and S5 plays an important role in translational accuracy. Functionally, interacts with and stabilizes bases of the 16S rRNA that are involved in tRNA selection in the A site and with the mRNA backbone. Located at the interface of the 30S and 50S subunits, it traverses the body of the 30S subunit contacting proteins on the other side and probably holding the rRNA structure together. The combined cluster of proteins S8, S12 and S17 appears to hold together the shoulder and platform of the 30S subunit. In Yersinia enterocolitica serotype O:8 / biotype 1B (strain NCTC 13174 / 8081), this protein is Small ribosomal subunit protein uS12.